Reading from the N-terminus, the 222-residue chain is Thiopurine S-methyltransferase (222 aa).

Tryptophan 10, leucine 45, glutamate 66, and arginine 124 together coordinate S-adenosyl-L-methionine.

This sequence belongs to the class I-like SAM-binding methyltransferase superfamily. TPMT family.

It localises to the cytoplasm. It carries out the reaction S-adenosyl-L-methionine + a thiopurine = S-adenosyl-L-homocysteine + a thiopurine S-methylether.. In Methylococcus capsulatus (strain ATCC 33009 / NCIMB 11132 / Bath), this protein is Thiopurine S-methyltransferase.